The primary structure comprises 884 residues: Alanine--tRNA ligase (884 aa).

Residues His-568, His-572, Cys-670, and His-674 each coordinate Zn(2+).

The protein belongs to the class-II aminoacyl-tRNA synthetase family. It depends on Zn(2+) as a cofactor.

The protein resides in the cytoplasm. It carries out the reaction tRNA(Ala) + L-alanine + ATP = L-alanyl-tRNA(Ala) + AMP + diphosphate. Functionally, catalyzes the attachment of alanine to tRNA(Ala) in a two-step reaction: alanine is first activated by ATP to form Ala-AMP and then transferred to the acceptor end of tRNA(Ala). Also edits incorrectly charged Ser-tRNA(Ala) and Gly-tRNA(Ala) via its editing domain. The sequence is that of Alanine--tRNA ligase from Synechococcus sp. (strain JA-2-3B'a(2-13)) (Cyanobacteria bacterium Yellowstone B-Prime).